A 355-amino-acid polypeptide reads, in one-letter code: UDP-N-acetylglucosamine--N-acetylmuramyl-(pentapeptide) pyrophosphoryl-undecaprenol N-acetylglucosamine transferase (355 aa).

UDP-N-acetyl-alpha-D-glucosamine is bound by residues 11 to 13 (TGG), Asn123, Arg162, Ser185, Ile239, 258 to 263 (ALTVSE), and Gln284.

This sequence belongs to the glycosyltransferase 28 family. MurG subfamily.

It localises to the cell inner membrane. The catalysed reaction is di-trans,octa-cis-undecaprenyl diphospho-N-acetyl-alpha-D-muramoyl-L-alanyl-D-glutamyl-meso-2,6-diaminopimeloyl-D-alanyl-D-alanine + UDP-N-acetyl-alpha-D-glucosamine = di-trans,octa-cis-undecaprenyl diphospho-[N-acetyl-alpha-D-glucosaminyl-(1-&gt;4)]-N-acetyl-alpha-D-muramoyl-L-alanyl-D-glutamyl-meso-2,6-diaminopimeloyl-D-alanyl-D-alanine + UDP + H(+). It functions in the pathway cell wall biogenesis; peptidoglycan biosynthesis. In terms of biological role, cell wall formation. Catalyzes the transfer of a GlcNAc subunit on undecaprenyl-pyrophosphoryl-MurNAc-pentapeptide (lipid intermediate I) to form undecaprenyl-pyrophosphoryl-MurNAc-(pentapeptide)GlcNAc (lipid intermediate II). The protein is UDP-N-acetylglucosamine--N-acetylmuramyl-(pentapeptide) pyrophosphoryl-undecaprenol N-acetylglucosamine transferase of Hydrogenovibrio crunogenus (strain DSM 25203 / XCL-2) (Thiomicrospira crunogena).